Reading from the N-terminus, the 288-residue chain is Ribosomal RNA small subunit methyltransferase I (288 aa).

Belongs to the methyltransferase superfamily. RsmI family.

It localises to the cytoplasm. It catalyses the reaction cytidine(1402) in 16S rRNA + S-adenosyl-L-methionine = 2'-O-methylcytidine(1402) in 16S rRNA + S-adenosyl-L-homocysteine + H(+). Catalyzes the 2'-O-methylation of the ribose of cytidine 1402 (C1402) in 16S rRNA. The polypeptide is Ribosomal RNA small subunit methyltransferase I (Vibrio cholerae serotype O1 (strain ATCC 39315 / El Tor Inaba N16961)).